A 540-amino-acid chain; its full sequence is Chaperonin GroEL (540 aa).

ATP-binding positions include 30 to 33 (TLGP), Lys-51, 87 to 91 (DGTTT), Gly-415, and Asp-496.

Belongs to the chaperonin (HSP60) family. As to quaternary structure, forms a cylinder of 14 subunits composed of two heptameric rings stacked back-to-back. Interacts with the co-chaperonin GroES.

It is found in the cytoplasm. The enzyme catalyses ATP + H2O + a folded polypeptide = ADP + phosphate + an unfolded polypeptide.. In terms of biological role, together with its co-chaperonin GroES, plays an essential role in assisting protein folding. The GroEL-GroES system forms a nano-cage that allows encapsulation of the non-native substrate proteins and provides a physical environment optimized to promote and accelerate protein folding. This is Chaperonin GroEL from Thermodesulfovibrio yellowstonii (strain ATCC 51303 / DSM 11347 / YP87).